A 513-amino-acid chain; its full sequence is Flavonoid 3'-monooxygenase (513 aa).

Residues methionine 1–phenylalanine 21 traverse the membrane as a helical segment. Residues serine 22–glycine 513 lie on the Cytoplasmic side of the membrane. A heme-binding site is contributed by cysteine 445.

Belongs to the cytochrome P450 family. The cofactor is heme. In terms of tissue distribution, high expression in siliques and to a lower extent in stems, flowers and senescing leaves.

It localises to the endoplasmic reticulum membrane. The enzyme catalyses a 3'-unsubstituted flavone + reduced [NADPH--hemoprotein reductase] + O2 = a 3'-hydroxyflavone + oxidized [NADPH--hemoprotein reductase] + H2O + H(+). It participates in secondary metabolite biosynthesis; flavonoid biosynthesis. In terms of biological role, catalyzes the 3'-hydroxylation of the flavonoid B-ring to the 3',4'-hydroxylated state. Convert naringenin to eriodictyol and dihydrokaempferol to dihydroquercetin. The protein is Flavonoid 3'-monooxygenase (CYP75B1) of Arabidopsis thaliana (Mouse-ear cress).